The primary structure comprises 671 residues: DNA ligase (671 aa).

NAD(+)-binding positions include 32 to 36, 81 to 82, and E113; these read DAEYD and SL. Residue K115 is the N6-AMP-lysine intermediate of the active site. R136, E173, K290, and K314 together coordinate NAD(+). Zn(2+) contacts are provided by C408, C411, C426, and C432. The 79-residue stretch at 593–671 folds into the BRCT domain; the sequence is EIDSPFAGKT…ETEMLHLLGS (79 aa).

Belongs to the NAD-dependent DNA ligase family. LigA subfamily. It depends on Mg(2+) as a cofactor. Mn(2+) serves as cofactor.

It catalyses the reaction NAD(+) + (deoxyribonucleotide)n-3'-hydroxyl + 5'-phospho-(deoxyribonucleotide)m = (deoxyribonucleotide)n+m + AMP + beta-nicotinamide D-nucleotide.. Its function is as follows. DNA ligase that catalyzes the formation of phosphodiester linkages between 5'-phosphoryl and 3'-hydroxyl groups in double-stranded DNA using NAD as a coenzyme and as the energy source for the reaction. It is essential for DNA replication and repair of damaged DNA. The protein is DNA ligase of Escherichia coli O6:K15:H31 (strain 536 / UPEC).